Here is an 83-residue protein sequence, read N- to C-terminus: Cell division topological specificity factor (83 aa).

It belongs to the MinE family.

In terms of biological role, prevents the cell division inhibition by proteins MinC and MinD at internal division sites while permitting inhibition at polar sites. This ensures cell division at the proper site by restricting the formation of a division septum at the midpoint of the long axis of the cell. This chain is Cell division topological specificity factor, found in Marinobacter nauticus (strain ATCC 700491 / DSM 11845 / VT8) (Marinobacter aquaeolei).